The primary structure comprises 1394 residues: ABC transporter patM (1394 aa).

The tract at residues 1–41 is disordered; it reads MVDNYHSSLDVAKTPIQSDADAQKSEAETEGPSSKSSQIAA. Residues 98 to 341 form the ABC transporter 1 domain; it reads SPLQNRQRKQ…FEDLGFECLS (244 aa). The next 6 helical transmembrane spans lie at 437–457, 467–487, 511–531, 546–566, 579–599, and 688–708; these read SLWA…GTLF, LFIF…QSMA, IAYA…AICY, GNFF…SMFF, AVLP…LYVP, and VGIN…GMEM. Residues 727 to 755 form a disordered region; that stretch reads VTHRRDKIDSETGQDQGNESSEMSAGQSN. The span at 737–755 shows a compositional bias: polar residues; the sequence is ETGQDQGNESSEMSAGQSN. Residues 767 to 1013 form the ABC transporter 2 domain; sequence DKSHNLAWTN…EAIQYFQPRS (247 aa). Position 808 to 815 (808 to 815) interacts with ATP; that stretch reads GVSGAGKT. Helical transmembrane passes span 1131-1151, 1177-1197, 1219-1239, 1245-1265, 1280-1300, and 1368-1388; these read GAYN…PLGL, LAFV…SSLV, FLMY…CASL, AAFA…GTLS, ISPL…DLPI, and IGVF…MTYL.

It belongs to the ABC transporter superfamily. ABCG family. PDR (TC 3.A.1.205) subfamily.

Its subcellular location is the vacuole membrane. It is found in the cell membrane. The protein operates within mycotoxin biosynthesis; patulin biosynthesis. ABC transporter; part of the gene cluster that mediates the biosynthesis of patulin, an acetate-derived tetraketide mycotoxin produced by several fungal species that shows antimicrobial properties against several bacteria. May be involved in the secretion of E-ascladiol to be converted to patulin by the secreted patulin synthase patE. This Penicillium expansum (Blue mold rot fungus) protein is ABC transporter patM.